A 1054-amino-acid polypeptide reads, in one-letter code: NACHT, LRR and PYD domains-containing protein 12 (1054 aa).

The 95-residue stretch at 1 to 95 (MLPSTARDGL…WERGQGEDLV (95 aa)) folds into the Pyrin domain. In terms of domain architecture, FISNA spans 129–201 (YKDYVRRKFQ…SPIQMETLFE (73 aa)). One can recognise an NACHT domain in the interval 211–528 (HTVVLQGAAG…EFFAAMYCAL (318 aa)). 217 to 224 (GAAGMGKS) contributes to the ATP binding site. LRR repeat units lie at residues 821–841 (YLVE…KLLC), 850–871 (RLRT…DLAS), 878–899 (SLLE…LLCE), 907–928 (KLQT…GIAS), 935–955 (CLQE…QLLG), 964–985 (RLQK…DLSS), 992–1013 (TLHE…LLCK), and 1021–1042 (KLRV…RMAA).

The protein belongs to the NLRP family. Interacts (via pyrin domain) with ASC. Interacts (via pyrin domain) with FAF1 (via UBA domain). Interacts with MAP3K14; this interaction promotes proteasomal degradation of MAP3K14. Interacts with NOD2; this interaction promotes degradation of NOD2 through the ubiquitin-proteasome pathway. Interacts with HSPA1A and HSPA8. Interacts with HSP90AA1. Interacts with TRIM25; this interaction inhibits RIGI-mediated signaling pathway. Mainly expressed in dendritic cells (DCs) and neutrophils.

The protein resides in the cytoplasm. Its function is as follows. Plays an essential role as an potent mitigator of inflammation. Primarily expressed in dendritic cells and macrophages, inhibits both canonical and non-canonical NF-kappa-B and ERK activation pathways. Functions as a negative regulator of NOD2 by targeting it to degradation via the proteasome pathway. In turn, promotes bacterial tolerance. Also inhibits the RIGI-mediated immune signaling against RNA viruses by reducing the E3 ubiquitin ligase TRIM25-mediated 'Lys-63'-linked RIGI activation but enhancing the E3 ubiquitin ligase RNF125-mediated 'Lys-48'-linked RIGI degradation. Also acts as a negative regulator of inflammatory response to mitigate obesity and obesity-associated diseases in adipose tissue. The protein is NACHT, LRR and PYD domains-containing protein 12 (Nlrp12) of Mus musculus (Mouse).